The following is a 606-amino-acid chain: Elongation factor 4 (606 aa).

One can recognise a tr-type G domain in the interval 10 to 192; the sequence is IRKKNFCIIA…AICKYVPSPR (183 aa). Residues 22–27 and 139–142 each bind GTP; these read DHGKST and NKID.

The protein belongs to the TRAFAC class translation factor GTPase superfamily. Classic translation factor GTPase family. LepA subfamily.

It localises to the cell inner membrane. The catalysed reaction is GTP + H2O = GDP + phosphate + H(+). In terms of biological role, required for accurate and efficient protein synthesis under certain stress conditions. May act as a fidelity factor of the translation reaction, by catalyzing a one-codon backward translocation of tRNAs on improperly translocated ribosomes. Back-translocation proceeds from a post-translocation (POST) complex to a pre-translocation (PRE) complex, thus giving elongation factor G a second chance to translocate the tRNAs correctly. Binds to ribosomes in a GTP-dependent manner. The chain is Elongation factor 4 from Borreliella burgdorferi (strain ATCC 35210 / DSM 4680 / CIP 102532 / B31) (Borrelia burgdorferi).